The primary structure comprises 1260 residues: MVVMLRYVWPLLLCSPCLLIQIPDEYKGHHVLEPPVITEQSPRRLVVFPTDDISLKCEARGRPQVEFRWTKDGIHFKPKEELGVVVHEAPYSGSFTIEGNNSFAQRFQGIYRCYASNKLGTAMSHEIQLVAEGAPKWPKETVKPVEVEEGESVVLPCNPPPSAAPPRIYWMNSKIFDIKQDERVSMGQNGDLYFANVLTSDNHSDYICNAHFPGTRTIIQKEPIDLRVKPTNSMIDRKPRLLFPTNSSSRLVALQGQSLILECIAEGFPTPTIKWLHPSDPMPTDRVIYQNHNKTLQLLNVGEEDDGEYTCLAENSLGSARHAYYVTVEAAPYWLQKPQSHLYGPGETARLDCQVQGRPQPEITWRINGMSMETVNKDQKYRIEQGSLILSNVQPTDTMVTQCEARNQHGLLLANAYIYVVQLPARILTKDNQTYMAVEGSTAYLLCKAFGAPVPSVQWLDEEGTTVLQDERFFPYANGTLSIRDLQANDTGRYFCQAANDQNNVTILANLQVKEATQITQGPRSAIEKKGARVTFTCQASFDPSLQASITWRGDGRDLQERGDSDKYFIEDGKLVIQSLDYSDQGNYSCVASTELDEVESRAQLLVVGSPGPVPHLELSDRHLLKQSQVHLSWSPAEDHNSPIEKYDIEFEDKEMAPEKWFSLGKVPGNQTSTTLKLSPYVHYTFRVTAINKYGPGEPSPVSESVVTPEAAPEKNPVDVRGEGNETNNMVITWKPLRWMDWNAPQIQYRVQWRPQGKQETWRKQTVSDPFLVVSNTSTFVPYEIKVQAVNNQGKGPEPQVTIGYSGEDYPQVSPELEDITIFNSSTVLVRWRPVDLAQVKGHLKGYNVTYWWKGSQRKHSKRHIHKSHIVVPANTTSAILSGLRPYSSYHVEVQAFNGRGLGPASEWTFSTPEGVPGHPEALHLECQSDTSLLLHWQPPLSHNGVLTGYLLSYHPVEGESKEQLFFNLSDPELRTHNLTNLNPDLQYRFQLQATTQQGGPGEAIVREGGTMALFGKPDFGNISATAGENYSVVSWVPRKGQCNFRFHILFKALPEGKVSPDHQPQPQYVSYNQSSYTQWNLQPDTKYEIHLIKEKVLLHHLDVKTNGTGPVRVSTTGSFASEGWFIAFVSAIILLLLILLILCFIKRSKGGKYSVKDKEDTQVDSEARPMKDETFGEYRSLESDNEEKAFGSSQPSLNGDIKPLGSDDSLADYGGSVDVQFNEDGSFIGQYSGKKEKEAAGGNDSSGATSPINPAVALE.

The N-terminal stretch at 1–19 is a signal peptide; sequence MVVMLRYVWPLLLCSPCLL. The Extracellular portion of the chain corresponds to 20-1123; sequence IQIPDEYKGH…VSTTGSFASE (1104 aa). 6 consecutive Ig-like C2-type domains span residues 35-130, 138-225, 239-327, 332-419, 424-506, and 517-600; these read PVIT…IQLV, PKET…EPID, PRLL…YYVT, PYWL…AYIY, PARI…NNVT, and TQIT…DEVE. 2 disulfides stabilise this stretch: C57-C113 and C157-C208. N-linked (GlcNAc...) asparagine glycans are attached at residues N100, N202, N246, and N293. Disulfide bonds link C263–C311 and C353–C403. N-linked (GlcNAc...) asparagine glycans are attached at residues N432, N478, N489, and N504. A disulfide bridge links C447 with C496. Cysteines 538 and 590 form a disulfide. 2 consecutive short sequence motifs (cell attachment site) follow at residues 553 to 555 and 562 to 564; these read RGD. 2 N-linked (GlcNAc...) asparagine glycosylation sites follow: N587 and N670. Fibronectin type-III domains follow at residues 613 to 711, 716 to 809, 811 to 916, 919 to 1015, and 1014 to 1112; these read PVPH…TPEA, NPVD…SGED, PQVS…PEGV, HPEA…MALF, and LFGK…TGPV. The interval 697-724 is disordered; that stretch reads GEPSPVSESVVTPEAAPEKNPVDVRGEG. Over residues 712-724 the composition is skewed to basic and acidic residues; it reads APEKNPVDVRGEG. Residues N725, N776, N824, N848, N875, N968, N978, N1022, N1030, N1073, and N1107 are each glycosylated (N-linked (GlcNAc...) asparagine). A helical transmembrane segment spans residues 1124–1146; the sequence is GWFIAFVSAIILLLLILLILCFI. Residues 1147–1260 lie on the Cytoplasmic side of the membrane; that stretch reads KRSKGGKYSV…SPINPAVALE (114 aa). Phosphoserine is present on residues S1166, S1181, S1184, S1197, S1246, S1247, and S1251. Disordered stretches follow at residues 1183-1210 and 1229-1260; these read ESDN…SDDS and IGQY…VALE. Polar residues predominate over residues 1244-1253; sequence NDSSGATSPI.

The protein belongs to the immunoglobulin superfamily. L1/neurofascin/NgCAM family. Interacts with SHTN1; the interaction occurs in axonal growth cones. Interacts with isoform 2 of BSG. Expressed in the brain, including in the molecular layer of the cerebellar cortex, the fiber-rich layers of the hippocampus (alveus, and strata lacunosum moleculare, radiatum, and oriens), the nerve fiber layer and the inner and outer plexiform layers of the retina, and in the molecular layer of the olfactory bulb (at protein level).

The protein localises to the cell membrane. It is found in the cell projection. It localises to the growth cone. Neural cell adhesion molecule involved in the dynamics of cell adhesion and in the generation of transmembrane signals at tyrosine kinase receptors. During brain development, critical in multiple processes, including neuronal migration, axonal growth and fasciculation, and synaptogenesis. In the mature brain, plays a role in the dynamics of neuronal structure and function, including synaptic plasticity. The polypeptide is Neural cell adhesion molecule L1 (L1cam) (Mus musculus (Mouse)).